Consider the following 167-residue polypeptide: Brain ribonuclease (167 aa).

Residues 1 to 26 (MALKSLVLLSLLVLVLLLVQVQPSLG) form the signal peptide. Substrate is bound by residues Lys33 and Arg36. The Proton acceptor role is filled by His38. Disulfide bonds link Cys52-Cys110, Cys66-Cys121, Cys84-Cys136, and Cys91-Cys98. 67 to 71 (KPVNT) lines the substrate pocket. Residue Asn88 is glycosylated (N-linked (GlcNAc...) asparagine). Substrate contacts are provided by Lys92 and Arg111. The active-site Proton donor is His145. O-linked (GalNAc...) threonine glycosylation occurs at Thr155. O-linked (GalNAc...) serine glycosylation is present at Ser159.

It belongs to the pancreatic ribonuclease family.

The protein resides in the secreted. The polypeptide is Brain ribonuclease (BRN) (Bos taurus (Bovine)).